Consider the following 271-residue polypeptide: Orotidine 5'-phosphate decarboxylase (271 aa).

Lysine 97 serves as the catalytic Proton donor.

The protein belongs to the OMP decarboxylase family. Type 2 subfamily.

The enzyme catalyses orotidine 5'-phosphate + H(+) = UMP + CO2. Its pathway is pyrimidine metabolism; UMP biosynthesis via de novo pathway; UMP from orotate: step 2/2. This chain is Orotidine 5'-phosphate decarboxylase, found in Leptospira borgpetersenii serovar Hardjo-bovis (strain JB197).